Reading from the N-terminus, the 378-residue chain is Ribosomal RNA large subunit methyltransferase G (378 aa).

It belongs to the methyltransferase superfamily. RlmG family.

The protein localises to the cytoplasm. It carries out the reaction guanosine(1835) in 23S rRNA + S-adenosyl-L-methionine = N(2)-methylguanosine(1835) in 23S rRNA + S-adenosyl-L-homocysteine + H(+). Its function is as follows. Specifically methylates the guanine in position 1835 (m2G1835) of 23S rRNA. This Escherichia coli O157:H7 protein is Ribosomal RNA large subunit methyltransferase G.